The chain runs to 379 residues: Probable RNA methyltransferase RB6963 (379 aa).

Glu-89 acts as the Proton acceptor in catalysis. A Radical SAM core domain is found at 96–332 (ATGRTTLCVS…VRYSLGNDIE (237 aa)). Residues Cys-103 and Cys-335 are joined by a disulfide bond. The [4Fe-4S] cluster site is built by Cys-110, Cys-114, and Cys-117. Residues 160–161 (GE), Ser-192, 215–217 (SLH), and Asn-291 contribute to the S-adenosyl-L-methionine site. Cys-335 serves as the catalytic S-methylcysteine intermediate.

This sequence belongs to the radical SAM superfamily. RlmN family. It depends on [4Fe-4S] cluster as a cofactor.

It is found in the cytoplasm. In Rhodopirellula baltica (strain DSM 10527 / NCIMB 13988 / SH1), this protein is Probable RNA methyltransferase RB6963.